Here is a 137-residue protein sequence, read N- to C-terminus: Histone H2B (137 aa).

Residues 1 to 10 are compositionally biased toward basic and acidic residues; the sequence is MPPKPADKKP. A disordered region spans residues 1-45; sequence MPPKPADKKPASKAPATASKAPEKKDAGKKTAASGDKKKRTKARK. An N6-acetyllysine; alternate mark is found at K8 and K9. Glycyl lysine isopeptide (Lys-Gly) (interchain with G-Cter in SUMO); alternate cross-links involve residues K8 and K9. Residue S12 is modified to Phosphoserine. K13 carries the post-translational modification N6-acetyllysine. K24 is modified (N6-acetyllysine; alternate). K24 is covalently cross-linked (Glycyl lysine isopeptide (Lys-Gly) (interchain with G-Cter in SUMO); alternate). Residue K25 forms a Glycyl lysine isopeptide (Lys-Gly) (interchain with G-Cter in SUMO) linkage. K131 participates in a covalent cross-link: Glycyl lysine isopeptide (Lys-Gly) (interchain with G-Cter in ubiquitin).

This sequence belongs to the histone H2B family. As to quaternary structure, the nucleosome is a histone octamer containing two molecules each of H2A, H2B, H3 and H4 assembled in one H3-H4 heterotetramer and two H2A-H2B heterodimers. The octamer wraps approximately 147 bp of DNA. Post-translationally, monoubiquitinated by the ubc-2-bre-1 complex to form H2BK123ub1. H2BK123ub1 gives a specific tag for epigenetic transcriptional activation and is also prerequisite for H3K4me and H3K79me formation. H2BK123ub1 also modulates the formation of double-strand breaks during meiosis and is a prerequisite for DNA-damage checkpoint activation. In terms of processing, phosphorylated by ste-20 to form H2BS10ph during progression through meiotic prophase. May be correlated with chromosome condensation. Acetylated by gcn-5 to form H2BK11ac and H2BK16ac. H2BK16ac can also be formed by esa-1. Acetylation of N-terminal lysines and particularly formation of H2BK11acK16ac has a positive effect on transcription. Post-translationally, sumoylation to form H2BK6su or H2BK7su, and probably also H2BK16su or H2BK17su, occurs preferentially near the telomeres and represses gene transcription.

The protein resides in the nucleus. It is found in the chromosome. Core component of nucleosome. Nucleosomes wrap and compact DNA into chromatin, limiting DNA accessibility to the cellular machineries which require DNA as a template. Histones thereby play a central role in transcription regulation, DNA repair, DNA replication and chromosomal stability. DNA accessibility is regulated via a complex set of post-translational modifications of histones, also called histone code, and nucleosome remodeling. This chain is Histone H2B (hh2b), found in Neurospora crassa (strain ATCC 24698 / 74-OR23-1A / CBS 708.71 / DSM 1257 / FGSC 987).